A 366-amino-acid chain; its full sequence is Molybdenum import ATP-binding protein ModC (366 aa).

One can recognise an ABC transporter domain in the interval 1-231 (MSEVILQLQK…KAMRPWQSFS (231 aa)). 33 to 40 (GRSGAGKT) contributes to the ATP binding site. A Mop domain is found at 292-361 (ASSIRNILPA…IKGVSVAQRD (70 aa)).

It belongs to the ABC transporter superfamily. Molybdate importer (TC 3.A.1.8) family. As to quaternary structure, the complex is composed of two ATP-binding proteins (ModC), two transmembrane proteins (ModB) and a solute-binding protein (ModA).

The protein localises to the cell inner membrane. The enzyme catalyses molybdate(out) + ATP + H2O = molybdate(in) + ADP + phosphate + H(+). Part of the ABC transporter complex ModABC involved in molybdenum import. Responsible for energy coupling to the transport system. The sequence is that of Molybdenum import ATP-binding protein ModC from Vibrio cholerae serotype O1 (strain ATCC 39315 / El Tor Inaba N16961).